The sequence spans 109 residues: Class I hydrophobin 7 (109 aa).

An N-terminal signal peptide occupies residues 1–17; the sequence is MFAQSFIITALAALAVA. Intrachain disulfides connect cysteine 28/cysteine 88, cysteine 35/cysteine 82, cysteine 36/cysteine 69, and cysteine 89/cysteine 102.

The protein belongs to the fungal hydrophobin family. As to quaternary structure, self-assembles to form functional amyloid fibrils called rodlets. Self-assembly into fibrillar rodlets occurs spontaneously at hydrophobic:hydrophilic interfaces and the rodlets further associate laterally to form amphipathic monolayers.

It is found in the secreted. Its subcellular location is the cell wall. Its function is as follows. Aerial growth, conidiation, and dispersal of filamentous fungi in the environment rely upon a capability of their secreting small amphipathic proteins called hydrophobins (HPBs) with low sequence identity. Class I can self-assemble into an outermost layer of rodlet bundles on aerial cell surfaces, conferring cellular hydrophobicity that supports fungal growth, development and dispersal; whereas Class II form highly ordered films at water-air interfaces through intermolecular interactions but contribute nothing to the rodlet structure. Hydph7 is a class I hydrophobin involved in fruiting body development. This Pleurotus ostreatus (strain PC15) (Oyster mushroom) protein is Class I hydrophobin 7.